The chain runs to 213 residues: Immunoglobulin lambda-like polypeptide 1 (213 aa).

A signal peptide spans 1 to 37; the sequence is MRPGTGQGGLEAPGEPGPNLRQRWPLLLLGLAVVTHG. A j region region spans residues 97–108; sequence VFGSGTQLTVLS. The interval 109 to 213 is c region; the sequence is QPKATPSVTL…EKTVAPAECS (105 aa). Positions 114-208 constitute an Ig-like C1-type domain; sequence PSVTLFPPSS…EGSTVEKTVA (95 aa). C135 and C194 are disulfide-bonded.

As to quaternary structure, associates non-covalently with VPREB1. Interacts with SYNV1/HRD1 (via N-terminus); this interaction leads to increased IGLL1 ubiquitination and degradation in pre-B cells, possibly through a lysosomal, not proteasomal, pathway. Expressed only in pre-B-cells and a special B-cell line (which is surface Ig negative).

The protein resides in the endoplasmic reticulum. It localises to the secreted. Functionally, critical for B-cell development. The sequence is that of Immunoglobulin lambda-like polypeptide 1 (IGLL1) from Homo sapiens (Human).